Here is a 519-residue protein sequence, read N- to C-terminus: Alkaline phosphatase, tissue-nonspecific isozyme (519 aa).

Positions 1–16 are cleaved as a signal peptide; the sequence is MKAFLLTLLAQLCSAS. Aspartate 59 is a Mg(2+) binding site. The Zn(2+) site is built by aspartate 59 and serine 109. Serine 109 (phosphoserine intermediate) is an active-site residue. Cysteine 138 and cysteine 200 are joined by a disulfide. Asparagine 139 carries an N-linked (GlcNAc...) asparagine glycan. Threonine 172 provides a ligand contact to Mg(2+). N-linked (GlcNAc...) asparagine glycosylation is present at asparagine 229. Glutamate 234 lines the Ca(2+) pocket. Residue asparagine 278 is glycosylated (N-linked (GlcNAc...) asparagine). Ca(2+)-binding residues include phenylalanine 289 and glutamate 290. A glycan (N-linked (GlcNAc...) asparagine) is linked at asparagine 302. Aspartate 305 contacts Ca(2+). Glutamate 331 is a binding site for Mg(2+). Residues aspartate 336, histidine 340, aspartate 377, and histidine 378 each contribute to the Zn(2+) site. The N-linked (GlcNAc...) asparagine glycan is linked to asparagine 429. Histidine 453 lines the Zn(2+) pocket. Cysteines 488 and 496 form a disulfide. Serine 498 carries the GPI-anchor amidated serine lipid modification. The propeptide at 499–519 is removed in mature form; that stretch reads AARPAATATLLPVLLLLLLLC.

It belongs to the alkaline phosphatase family. As to quaternary structure, homodimer. Mg(2+) serves as cofactor. Zn(2+) is required as a cofactor. It depends on Ca(2+) as a cofactor.

The protein resides in the cell membrane. The protein localises to the extracellular vesicle membrane. It carries out the reaction a phosphate monoester + H2O = an alcohol + phosphate. The catalysed reaction is diphosphate + H2O = 2 phosphate + H(+). It catalyses the reaction pyridoxal 5'-phosphate + H2O = pyridoxal + phosphate. The enzyme catalyses phosphoethanolamine + H2O = ethanolamine + phosphate. It carries out the reaction ATP + H2O = ADP + phosphate + H(+). The catalysed reaction is ADP + H2O = AMP + phosphate + H(+). It catalyses the reaction AMP + H2O = adenosine + phosphate. Alkaline phosphatase that metabolizes various phosphate compounds and plays a key role in skeletal mineralization and adaptive thermogenesis. Has broad substrate specificity and can hydrolyze a considerable variety of compounds: however, only a few substrates, such as diphosphate (inorganic pyrophosphate; PPi) and pyridoxal 5'-phosphate (PLP) are natural substrates. Plays an essential role in skeletal and dental mineralization via its ability to hydrolyze extracellular diphosphate, a potent mineralization inhibitor, to phosphate: it thereby promotes hydroxyapatite crystal formation and increases inorganic phosphate concentration. Catalyzes dephosphorylation of PLP to pyridoxal (PL), the transportable form of vitamin B6, in order to provide a sufficient amount of PLP in the brain, an essential cofactor for enzymes catalyzing the synthesis of diverse neurotransmitters. Additionally, also able to mediate ATP degradation in a stepwise manner to adenosine, thereby regulating the availability of ligands for purinergic receptors. Involved in the establishment and growth of feather germs. The chain is Alkaline phosphatase, tissue-nonspecific isozyme (ALPL) from Gallus gallus (Chicken).